Here is a 362-residue protein sequence, read N- to C-terminus: Protein Tob1 (362 aa).

The short motif at R22 to K39 is the Bipartite nuclear localization signal element. The tract at residues V82 to V92 is important for nuclear localization. The segment covering D144 to S160 has biased composition (low complexity). Positions D144–S171 are disordered. The tract at residues A161–K220 is required for interaction with CPEB3. T204 carries the phosphothreonine modification. The short motif at V228–L236 is the Nuclear export signal element. The tract at residues L234–L284 is disordered. Composition is skewed to low complexity over residues S238–S256 and Q265–Q280.

It belongs to the BTG family. As to quaternary structure, interacts with ERBB2. Interacts with CNOT7. Interacts with CPEB3 (via C-terminal RNA-binding region); recruits CNOT7 to CPEB3 to form a ternary complex required for mRNA deadenylation and decay. Interacts with CNOT8. Interacts with CPEB4. Phosphorylated on Ser and Thr residues. Ubiquitous.

Its subcellular location is the cytoplasm. The protein localises to the nucleus. Its function is as follows. Anti-proliferative protein; the function is mediated by association with deadenylase subunits of the CCR4-NOT complex. Mediates CPEB3-accelerated mRNA deadenylation by binding to CPEB3 and recruiting CNOT7 which leads to target mRNA deadenylation and decay. In Mus musculus (Mouse), this protein is Protein Tob1 (Tob1).